A 622-amino-acid chain; its full sequence is DNA mismatch repair protein MutL (622 aa).

It belongs to the DNA mismatch repair MutL/HexB family.

Its function is as follows. This protein is involved in the repair of mismatches in DNA. It is required for dam-dependent methyl-directed DNA mismatch repair. May act as a 'molecular matchmaker', a protein that promotes the formation of a stable complex between two or more DNA-binding proteins in an ATP-dependent manner without itself being part of a final effector complex. This Prosthecochloris aestuarii (strain DSM 271 / SK 413) protein is DNA mismatch repair protein MutL.